Here is a 216-residue protein sequence, read N- to C-terminus: Type-4 uracil-DNA glycosylase (216 aa).

[4Fe-4S] cluster contacts are provided by Cys14 and Cys17. Uracil-binding positions include 41–43 (GEA), Phe55, and Asn82. [4Fe-4S] cluster contacts are provided by Cys86 and Cys102. Residue His164 coordinates uracil.

It belongs to the uracil-DNA glycosylase (UDG) superfamily. Type 4 (UDGa) family. As to quaternary structure, interacts with the sliding clamp PCNA3 subunit.

It carries out the reaction Hydrolyzes single-stranded DNA or mismatched double-stranded DNA and polynucleotides, releasing free uracil.. Functionally, removes uracil bases that are present in DNA as a result of either deamination of cytosine or misincorporation of dUMP instead of dTMP. Can remove uracil from double-stranded DNA containing either a U/G or U/A base pair as well as from single-stranded DNA. The chain is Type-4 uracil-DNA glycosylase from Saccharolobus solfataricus (strain ATCC 35092 / DSM 1617 / JCM 11322 / P2) (Sulfolobus solfataricus).